The following is a 273-amino-acid chain: Type II methyltransferase M2.MboI (273 aa).

The protein belongs to the N(4)/N(6)-methyltransferase family.

It catalyses the reaction a 2'-deoxyadenosine in DNA + S-adenosyl-L-methionine = an N(6)-methyl-2'-deoxyadenosine in DNA + S-adenosyl-L-homocysteine + H(+). A beta subtype methylase that recognizes the double-stranded sequence 5'-GATC-3', methylates A-2 on both strands, and protects the DNA from cleavage by the MboI endonuclease. This seems to be a weaker methylase than M1.MboI. The sequence is that of Type II methyltransferase M2.MboI (mboIBM) from Moraxella bovis.